Reading from the N-terminus, the 693-residue chain is Heat shock protein homolog SSE2 (693 aa).

A disordered region spans residues 653–693 (LRANQETSKMNDIAEKLAEQRRARAASDDSDDNNDENMDLD). Basic and acidic residues predominate over residues 664–679 (DIAEKLAEQRRARAAS). Residues 680-693 (DDSDDNNDENMDLD) show a composition bias toward acidic residues.

Belongs to the heat shock protein 70 family.

Has a calcium-dependent calmodulin-binding activity. In Saccharomyces cerevisiae (strain ATCC 204508 / S288c) (Baker's yeast), this protein is Heat shock protein homolog SSE2 (SSE2).